Here is a 543-residue protein sequence, read N- to C-terminus: MAKDIKFSADARAAMVRGVDMLADTVKVTLGPKGRNVVLEKAFGSPLITNDGVTIAKEIELEDHFENMGAKLVSEVASKTNDIAGDGTTTATVLTQAIVHEGLKNVTAGANPIGIRRGIETATATAVEALKAIAQPVSGKEAIAQVAAVSSRSEKVGEYISEAMERVGNDGVITIEESRGMETELEVVEGMQFDRGYLSQYMVTDNEKMVADLENPFILITDKKVSNIQDILPLLEEVLKTNRPLLIIADDVDGEALPTLVLNKIRGTFNVVAVKAPGFGDRRKAMLEDIAILTGGTVITEDLGLELKDATMTALGQAAKITVDKDSTVIVEGSGSSEAIANRIALIKSQLETTTSDFDREKLQERLAKLAGGVAVIKVGAPTETALKEMKLRIEDALNATRAAVEEGIVAGGGTALITVIEKVAALELEGDDATGRNIVLRALEEPVRQIALNAGYEGSVVIDKLKNSPAGTGFNAATGEWVDMIKTGIIDPVKVTRSALQNAASVASLILTTEAVVANKPEPAAPAPAMPAGMDPGMMGGF.

ATP-binding positions include 29 to 32, 86 to 90, Gly-413, 476 to 478, and Asp-492; these read TLGP, DGTTT, and NAA.

This sequence belongs to the chaperonin (HSP60) family. Forms a cylinder of 14 subunits composed of two heptameric rings stacked back-to-back. Interacts with the co-chaperonin GroES.

The protein localises to the cytoplasm. The enzyme catalyses ATP + H2O + a folded polypeptide = ADP + phosphate + an unfolded polypeptide.. Functionally, together with its co-chaperonin GroES, plays an essential role in assisting protein folding. The GroEL-GroES system forms a nano-cage that allows encapsulation of the non-native substrate proteins and provides a physical environment optimized to promote and accelerate protein folding. The chain is Chaperonin GroEL from Streptococcus pyogenes serotype M5 (strain Manfredo).